Here is a 476-residue protein sequence, read N- to C-terminus: Aspartyl/glutamyl-tRNA(Asn/Gln) amidotransferase subunit B (476 aa).

This sequence belongs to the GatB/GatE family. GatB subfamily. Heterotrimer of A, B and C subunits.

The catalysed reaction is L-glutamyl-tRNA(Gln) + L-glutamine + ATP + H2O = L-glutaminyl-tRNA(Gln) + L-glutamate + ADP + phosphate + H(+). It catalyses the reaction L-aspartyl-tRNA(Asn) + L-glutamine + ATP + H2O = L-asparaginyl-tRNA(Asn) + L-glutamate + ADP + phosphate + 2 H(+). Functionally, allows the formation of correctly charged Asn-tRNA(Asn) or Gln-tRNA(Gln) through the transamidation of misacylated Asp-tRNA(Asn) or Glu-tRNA(Gln) in organisms which lack either or both of asparaginyl-tRNA or glutaminyl-tRNA synthetases. The reaction takes place in the presence of glutamine and ATP through an activated phospho-Asp-tRNA(Asn) or phospho-Glu-tRNA(Gln). The sequence is that of Aspartyl/glutamyl-tRNA(Asn/Gln) amidotransferase subunit B from Moorella thermoacetica (strain ATCC 39073 / JCM 9320).